The sequence spans 434 residues: Trigger factor (434 aa).

The PPIase FKBP-type domain occupies 160 to 245; sequence GDKVKMNFVG…LTEVLAANLP (86 aa).

It belongs to the FKBP-type PPIase family. Tig subfamily.

It localises to the cytoplasm. The enzyme catalyses [protein]-peptidylproline (omega=180) = [protein]-peptidylproline (omega=0). Its function is as follows. Involved in protein export. Acts as a chaperone by maintaining the newly synthesized protein in an open conformation. Functions as a peptidyl-prolyl cis-trans isomerase. The sequence is that of Trigger factor from Shewanella sp. (strain MR-4).